Here is a 270-residue protein sequence, read N- to C-terminus: Imidazoleglycerol-phosphate dehydratase 1, chloroplastic (270 aa).

Residues 1-62 constitute a chloroplast transit peptide; the sequence is MELSSASAIL…QSQLRQSISC (62 aa). An N-acetylserine modification is found at serine 63. Residues glutamate 84, 110–118, 136–140, arginine 162, and arginine 184 each bind substrate; these read HMLDQLASH and HHTNE. Residues histidine 110, histidine 136, histidine 137, and glutamate 140 each coordinate Mn(2+). Positions 208, 232, 233, and 236 each coordinate Mn(2+). Residues 232–240 and 262–264 each bind substrate; these read HHIIEATFK and SSK. The disordered stretch occupies residues 250-270; that stretch reads TETDPRRGGTIPSSKGVLSRS.

It belongs to the imidazoleglycerol-phosphate dehydratase family. The cofactor is Mn(2+).

Its subcellular location is the plastid. The protein localises to the chloroplast. It catalyses the reaction D-erythro-1-(imidazol-4-yl)glycerol 3-phosphate = 3-(imidazol-4-yl)-2-oxopropyl phosphate + H2O. Its pathway is amino-acid biosynthesis; L-histidine biosynthesis; L-histidine from 5-phospho-alpha-D-ribose 1-diphosphate: step 6/9. The sequence is that of Imidazoleglycerol-phosphate dehydratase 1, chloroplastic from Arabidopsis thaliana (Mouse-ear cress).